Here is a 71-residue protein sequence, read N- to C-terminus: Serine palmitoyltransferase small subunit A (71 aa).

The Cytoplasmic segment spans residues 1–12; sequence MAGMALARAWKQ. The chain crosses the membrane as a helical span at residues 13 to 29; that stretch reads MSWFYYQYLLVTALYML. Residues 30-34 are Lumenal-facing; it reads EPWER. The chain crosses the membrane as a helical span at residues 35–57; it reads TVFNSMLVSVVGMALYTGYVFMP. The Cytoplasmic portion of the chain corresponds to 58-71; sequence QHIMAILHYFEIVQ.

The protein belongs to the SPTSS family. SPTSSA subfamily. As to quaternary structure, component of the serine palmitoyltransferase (SPT) complex, which is composed of SPTLC1, SPTLC2 or SPTLC3 and SPTSSA or SPTSSB. The heterodimer consisting of SPTLC1 and SPTLC2/SPTLC3 forms the catalytic core of the enzyme, while SPTSSA or SPTSSB subunits determine substrate specificity. SPT also interacts with ORMDL proteins, especially ORMDL3, which negatively regulate SPT activity in the presence of ceramides. Interacts with MBOAT7; the interaction plays a role in MBOAT7 localization to mitochondria-associated membranes.

It localises to the endoplasmic reticulum membrane. The protein operates within lipid metabolism; sphingolipid metabolism. In terms of biological role, component of the serine palmitoyltransferase multisubunit enzyme (SPT) that catalyzes the initial and rate-limiting step in sphingolipid biosynthesis by condensing L-serine and activated acyl-CoA (most commonly palmitoyl-CoA) to form long-chain bases. The SPT complex is composed of SPTLC1, SPTLC2 or SPTLC3 and SPTSSA or SPTSSB. Within this complex, the heterodimer consisting of SPTLC1 and SPTLC2/SPTLC3 forms the catalytic core. Within the SPT complex, SPTSSA stimulates the catalytic activity and plays a role in substrate specificity, which depends upon the overall complex composition. The SPTLC1-SPTLC2-SPTSSA complex shows a strong preference for C16-CoA substrate, while the SPTLC1-SPTLC3-SPTSSA isozyme uses both C14-CoA and C16-CoA as substrates, with a slight preference for C14-CoA. Independently of its action as a SPT component, may be involved in MBOAT7 localization to mitochondria-associated membranes, a membrane bridge between the endoplasmic reticulum and mitochondria, may hence affect MBOAT7-catalyzed incorporation of arachidonic acid into phosphatidylinositol. This Mus musculus (Mouse) protein is Serine palmitoyltransferase small subunit A.